Reading from the N-terminus, the 872-residue chain is Tegument protein UL47 homolog (872 aa).

Residues 1 to 206 (MDQHHGVRGG…ENDTEVISDD (206 aa)) form a disordered region. Positions 13–33 (IRRPRRSIETRSHPFRAAGNT) match the Nuclear localization signal motif. Residues 31 to 41 (GNTQRTYSTPR) are compositionally biased toward polar residues. Composition is skewed to low complexity over residues 66–80 (ESST…PSTS) and 91–101 (DDAPAQPQAPR). 2 stretches are compositionally biased toward acidic residues: residues 110-134 (PEED…EEDQ) and 177-204 (AEEE…EVIS).

Belongs to the alphaherpesvirinae HHV-1 UL47 family. Interacts with US3 kinase. Interacts with UL31 and UL34; these interactions seem important for efficient virion nuclear egress. Interacts with UL41/VHS. Phosphorylated by US3. This phosphorylation is required for proper nuclear localization. In terms of processing, O-glycosylated.

The protein resides in the virion tegument. It localises to the host nucleus. Its subcellular location is the host cytoplasm. In terms of biological role, tegument protein that can bind to various RNA transcripts. Plays a role in the attenuation of selective viral and cellular mRNA degradation by modulating the activity of host shutoff RNase UL41/VHS. Also plays a role in the primary envelopment of virions in the perinuclear space, probably by interacting with two nuclear egress proteins UL31 and UL34. This chain is Tegument protein UL47 homolog (13), found in Equus caballus (Horse).